Here is a 155-residue protein sequence, read N- to C-terminus: uncharacterized protein (155 aa).

The signal sequence occupies residues 1 to 23 (MTILSLSRFMLAGVLLASFNASA).

The protein to E.coli YfjT.

This is an uncharacterized protein from Escherichia coli (strain K12).